The primary structure comprises 175 residues: MGTVRAARLCGAILGFLLLQGAFGKPSLITEPLSSNTGNSSSSEPRSSSSPASAGTPDTSQNITPISTTMSLRIREDSTILPSPTSETVLTVAAFGVISFIVILVVVVIILVSVVSLRFKCRKNKESEDPQKPGSSGLSESCSTANGEKDSITLISMKNINMNNSKGCPTAEKVI.

The signal sequence occupies residues 1–24; that stretch reads MGTVRAARLCGAILGFLLLQGAFG. The Extracellular portion of the chain corresponds to 25-91; the sequence is KPSLITEPLS…PSPTSETVLT (67 aa). Residues 33-66 form a disordered region; the sequence is LSSNTGNSSSSEPRSSSSPASAGTPDTSQNITPI. Over residues 34–60 the composition is skewed to low complexity; it reads SSNTGNSSSSEPRSSSSPASAGTPDTS. A helical transmembrane segment spans residues 92–112; it reads VAAFGVISFIVILVVVVIILV. Topologically, residues 113–175 are cytoplasmic; the sequence is SVVSLRFKCR…KGCPTAEKVI (63 aa). The interval 124 to 145 is disordered; that stretch reads NKESEDPQKPGSSGLSESCSTA. The segment covering 133–145 has biased composition (polar residues); the sequence is PGSSGLSESCSTA. At serine 165 the chain carries Phosphoserine.

The protein belongs to the ECSCR family. As to quaternary structure, interacts with FLNA. Interacts with the 20S proteasome subunit PSMA7. In terms of processing, may be heavily O-glycosylated.

It localises to the cell membrane. It is found in the cytoplasm. In terms of biological role, regulates endothelial chemotaxis and tube formation. Has a role in angiogenesis and apoptosis via modulation of the actin cytoskeleton and facilitation of proteasomal degradation of the apoptosis inhibitors BIRC3/IAP1 and BIRC2/IAP2. In Canis lupus familiaris (Dog), this protein is Endothelial cell-specific chemotaxis regulator (ECSCR).